Here is an 859-residue protein sequence, read N- to C-terminus: MEPLSHRGLPRLSWIDTLYSNFSYGADDYDAEGNEEQKGPPEGSETMPYIDESPTMSPQLSARSQGGGDSISPTPPEGLAPGVEAGKGLEMRKLVLSGFLASEEIYINQLEALLLPMKPLKATATTSQPVLTIQQIETIFYKIQDIYEIHKEFYDNLCPKVQQWDSQVTMGHLFQKLASQLGVYKAFVDNYKVALETAEKCSQSNNQFQKISEELKVKGPKDSRDSHTSVTMEALLYKPIDRVTRSTLVLHDLLKHTPVDHPDYPLLQDALRISQNFLSSINEDIDPRRTAVTTPKGETRQLVKDGFLVEVSEGSRKLRHVFLFTDVLLCAKLKKTSAGKHQQYDCKWYIPLADLVFPSPEESEASPQVHPFPDHELEDMKMKISALKSEIQKEKANKGQSRAIERLKKKMFENEFLLLLNSPTIPFRIHNRNGKSYLFLLSSDYERSEWREAIQKLQKKDLQAFVLSSVELQVLTGSCFKLRTVHNIPVTSNKDDDESPGLYGFLHVIVHSAKGFKQSANLYCTLEVDSFGYFVSKAKTRVFRDTTEPKWDEEFEIELEGSQSLRILCYEKCYDKTKVNKDNNEIVDKIMGKGQIQLDPQTVETKNWHTDVIEMNGIKVEFSMKFTSRDMSLKRTPSKKQSGVFGVKISVVTKRERSKVPYIVRQCVEEVEKRGIEEVGIYRISGVATDIQALKAVFDANNKDILLMLSDMDINAIAGTLKLYFRELPEPLLTDRLYPAFMEGIALSDPAAKENCMMHLLRSLPDPNLITFLFLLEHLKRVAEKEPVNKMSLHNLATVFGPTLLRPSEVESKAHLTSAADIWSHDVMAQVQVLLYYLQHPPISFAELKRNTLYFSTDV.

The segment at 27-84 is disordered; it reads DDYDAEGNEEQKGPPEGSETMPYIDESPTMSPQLSARSQGGGDSISPTPPEGLAPGVE. A compositionally biased stretch (polar residues) spans 54–64; the sequence is PTMSPQLSARS. S57 carries the phosphoserine modification. Residues 91–284 enclose the DH domain; the sequence is MRKLVLSGFL…QNFLSSINED (194 aa). The PH domain maps to 301–459; sequence QLVKDGFLVE…WREAIQKLQK (159 aa). In terms of domain architecture, C2 spans 484-613; the sequence is TVHNIPVTSN…ETKNWHTDVI (130 aa). The Rho-GAP domain occupies 647-845; that stretch reads VKISVVTKRE…YYLQHPPISF (199 aa).

In terms of assembly, interacts with DLG4.

Its subcellular location is the cell projection. The protein resides in the dendritic spine. The protein localises to the axon. It localises to the synapse. In terms of biological role, protein with a unique structure having two opposing regulatory activities toward small GTP-binding proteins. The C-terminus is a GTPase-activating protein domain which stimulates GTP hydrolysis by RAC1, RAC2 and CDC42. Accelerates the intrinsic rate of GTP hydrolysis of RAC1 or CDC42, leading to down-regulation of the active GTP-bound form. The central Dbl homology (DH) domain functions as guanine nucleotide exchange factor (GEF) that modulates the GTPases CDC42, RHOA and RAC1. Promotes the conversion of CDC42, RHOA and RAC1 from the GDP-bound to the GTP-bound form. Functions as an important negative regulator of neuronal RAC1 activity. Regulates macrophage functions such as CSF1-directed motility and phagocytosis through the modulation of RAC1 activity. In Bos taurus (Bovine), this protein is Active breakpoint cluster region-related protein (ABR).